Consider the following 66-residue polypeptide: Large ribosomal subunit protein bL33c (66 aa).

Belongs to the bacterial ribosomal protein bL33 family.

The protein localises to the plastid. It is found in the chloroplast. In Nasturtium officinale (Watercress), this protein is Large ribosomal subunit protein bL33c.